We begin with the raw amino-acid sequence, 377 residues long: 8-amino-7-oxononanoate synthase (377 aa).

A substrate-binding site is contributed by Arg13. 100–101 (GY) is a pyridoxal 5'-phosphate binding site. Residue His125 coordinates substrate. 3 residues coordinate pyridoxal 5'-phosphate: Ser171, His199, and Thr228. Lys231 is modified (N6-(pyridoxal phosphate)lysine). Thr345 contributes to the substrate binding site.

Belongs to the class-II pyridoxal-phosphate-dependent aminotransferase family. BioF subfamily. In terms of assembly, homodimer. Requires pyridoxal 5'-phosphate as cofactor.

It carries out the reaction 6-carboxyhexanoyl-[ACP] + L-alanine + H(+) = (8S)-8-amino-7-oxononanoate + holo-[ACP] + CO2. It functions in the pathway cofactor biosynthesis; biotin biosynthesis. In terms of biological role, catalyzes the decarboxylative condensation of pimeloyl-[acyl-carrier protein] and L-alanine to produce 8-amino-7-oxononanoate (AON), [acyl-carrier protein], and carbon dioxide. This is 8-amino-7-oxononanoate synthase from Nitrosococcus oceani (strain ATCC 19707 / BCRC 17464 / JCM 30415 / NCIMB 11848 / C-107).